The sequence spans 194 residues: Peptidyl-tRNA hydrolase (194 aa).

Tyr-17 contributes to the tRNA binding site. The Proton acceptor role is filled by His-22. Residues Phe-68, Asn-70, and Asn-116 each contribute to the tRNA site.

Belongs to the PTH family. As to quaternary structure, monomer.

The protein localises to the cytoplasm. It catalyses the reaction an N-acyl-L-alpha-aminoacyl-tRNA + H2O = an N-acyl-L-amino acid + a tRNA + H(+). Hydrolyzes ribosome-free peptidyl-tRNAs (with 1 or more amino acids incorporated), which drop off the ribosome during protein synthesis, or as a result of ribosome stalling. Functionally, catalyzes the release of premature peptidyl moieties from peptidyl-tRNA molecules trapped in stalled 50S ribosomal subunits, and thus maintains levels of free tRNAs and 50S ribosomes. The chain is Peptidyl-tRNA hydrolase from Haemophilus ducreyi (strain 35000HP / ATCC 700724).